A 366-amino-acid chain; its full sequence is Inhibin alpha chain (366 aa).

The N-terminal stretch at 1-20 (MVIQPSLLLLLLLTLQDVDS) is a signal peptide. A propeptide spanning residues 21–63 (CQGPELVRELVLAKVKALFLDALGPPAMDGEGGGPGIRRLPRR) is cleaved from the precursor. The propeptide at 64-233 (HALGGFMHRT…APSAGERARR (170 aa)) is inhibin alpha N-terminal region. Residues asparagine 147 and asparagine 269 are each glycosylated (N-linked (GlcNAc...) asparagine). 3 disulfide bridges follow: cysteine 263–cysteine 328, cysteine 292–cysteine 363, and cysteine 296–cysteine 365.

It belongs to the TGF-beta family. As to quaternary structure, dimeric, linked by one or more disulfide bonds. Activin B is a dimer of alpha and beta-B. Inhibin A is a dimer of alpha and beta-A. Inhibin B is a dimer of alpha and beta-B. Interacts with TGFBR3L; this interaction regulates female fertility. Proteolytic processing yields a number of bioactive forms, consisting either solely of the mature alpha chain, of the most N-terminal propeptide linked through a disulfide bond to the mature alpha chain, or of the entire proprotein. Mainly expressed in ovary and testis. Alpha- and beta-B-subunits are the predominant forms found in testis. Also found in placenta, pituitary, adrenal gland, bone marrow, kidney, spinal cord and brain.

The protein localises to the secreted. Functionally, inhibins and activins inhibit and activate, respectively, the secretion of follitropin by the pituitary gland. Inhibins/activins are involved in regulating a number of diverse functions such as hypothalamic and pituitary hormone secretion, gonadal hormone secretion, germ cell development and maturation, erythroid differentiation, insulin secretion, nerve cell survival, embryonic axial development or bone growth, depending on their subunit composition. Inhibins appear to oppose the functions of activins. Its function is as follows. Inhibin A is a dimer of alpha/INHA and beta-A/INHBA that functions as a feedback regulator in the hypothalamic-pituitary-gonadal (HPG) axis. Inhibits the secretion of FSH from the anterior pituitary gland by acting on pituitary gonadotrope cells. Antagonizes activin A by binding to the proteoglycan, betaglycan, and forming a stable complex with and, thereby, sequestering type II activin receptors while excluding type I receptor. Inhibin B is a dimer of alpha and beta-B that plays a crucial role in the regulation of the reproductive system by inhibiting the secretion of follicle-stimulating hormone (FSH) from the anterior pituitary gland. Thereby, maintains reproductive homeostasis in both males and females. Acts as a more potent suppressor of FSH release than inhibin A. Functions as competitive receptor antagonist binding activin type II receptors with high affinity in the presence of the TGF-beta type III coreceptor/TGFBR3L. This Rattus norvegicus (Rat) protein is Inhibin alpha chain (Inha).